Here is a 163-residue protein sequence, read N- to C-terminus: Dual specificity phosphatase 28 (163 aa).

The region spanning P10–A151 is the Tyrosine-protein phosphatase domain. C95 (phosphocysteine intermediate) is an active-site residue.

The protein belongs to the protein-tyrosine phosphatase family. Non-receptor class dual specificity subfamily. In terms of assembly, monomer.

The catalysed reaction is O-phospho-L-tyrosyl-[protein] + H2O = L-tyrosyl-[protein] + phosphate. It carries out the reaction O-phospho-L-seryl-[protein] + H2O = L-seryl-[protein] + phosphate. It catalyses the reaction O-phospho-L-threonyl-[protein] + H2O = L-threonyl-[protein] + phosphate. Its function is as follows. Has phosphatase activity with the synthetic substrate 6,8-difluoro-4-methylumbelliferyl phosphate (in vitro). Has almost no detectable activity with phosphotyrosine, even less activity with phosphothreonine and displays complete lack of activity with phosphoserine. The poor activity with phosphotyrosine may be due to steric hindrance by bulky amino acid sidechains that obstruct access to the active site. This chain is Dual specificity phosphatase 28 (Dusp28), found in Mus musculus (Mouse).